The following is a 74-amino-acid chain: uncharacterized protein (74 aa).

Positions S39–L74 are disordered.

This is an uncharacterized protein from Homo sapiens (Human).